Consider the following 32-residue polypeptide: Lectin (32 aa).

It belongs to the leguminous lectin family. In terms of assembly, homotetramer.

Functionally, metalloglycoprotein, containing Ca, Mg, Mn, and Zn and the carbohydrates galactose, glucosamine, mannose, and fucose. It agglutinates erythrocytes of blood group A1. This Macrotyloma axillare (Perennial horse gram) protein is Lectin.